The primary structure comprises 289 residues: N-acetylmuramoyl-L-alanine amidase AmiA (289 aa).

Residues 1–34 (MSTFKPLKTLTSRRQVLKAGLAALTLSGMSQAIA) constitute a signal peptide (tat-type signal). A disordered region spans residues 39–63 (LKTSNGHSKPKAKKSGGKRVVVLDP). Residues 46–55 (SKPKAKKSGG) are compositionally biased toward basic residues. Positions 59–273 (VVLDPGHGGI…IATAIAEGVI (215 aa)) constitute a MurNAc-LAA domain.

This sequence belongs to the N-acetylmuramoyl-L-alanine amidase 3 family. Post-translationally, exported by the Tat system. The position of the signal peptide cleavage has not been experimentally proven. Can also be exported by the Sec system.

Its subcellular location is the periplasm. It catalyses the reaction Hydrolyzes the link between N-acetylmuramoyl residues and L-amino acid residues in certain cell-wall glycopeptides.. Its function is as follows. Cell-wall hydrolase involved in septum cleavage during cell division. Can also act as powerful autolysin in the presence of murein synthesis inhibitors. In Escherichia coli (strain K12), this protein is N-acetylmuramoyl-L-alanine amidase AmiA (amiA).